A 144-amino-acid polypeptide reads, in one-letter code: MRQTTIVNREKANKKWFVVDAENQVVGRLAAFVASVLRGKTKPTFTPNADMGDYVIIINAEKAIFTAKKEEDKVYYHHSGYPGGLKSITAAKLRAKKPTAIVEKAIYGMLPHTKLGNKQRRNLFVVAGSEHKYAAQKPERLEVR.

The protein belongs to the universal ribosomal protein uL13 family. In terms of assembly, part of the 50S ribosomal subunit.

Functionally, this protein is one of the early assembly proteins of the 50S ribosomal subunit, although it is not seen to bind rRNA by itself. It is important during the early stages of 50S assembly. In Mycoplasmopsis agalactiae (strain NCTC 10123 / CIP 59.7 / PG2) (Mycoplasma agalactiae), this protein is Large ribosomal subunit protein uL13.